The following is a 448-amino-acid chain: Mitochondrial distribution and morphology protein 10 (448 aa).

Disordered regions lie at residues glutamine 101–alanine 126 and proline 366–glutamate 386. Positions asparagine 112–alanine 126 are enriched in basic and acidic residues.

It belongs to the MDM10 family. As to quaternary structure, component of the ER-mitochondria encounter structure (ERMES) or MDM complex, composed of MMM1, MDM10, MDM12 and MDM34. Associates with the mitochondrial outer membrane sorting assembly machinery SAM(core) complex.

It localises to the mitochondrion outer membrane. Component of the ERMES/MDM complex, which serves as a molecular tether to connect the endoplasmic reticulum and mitochondria. Components of this complex are involved in the control of mitochondrial shape and protein biogenesis and may function in phospholipid exchange. MDM10 is involved in the late assembly steps of the general translocase of the mitochondrial outer membrane (TOM complex). Functions in the TOM40-specific route of the assembly of outer membrane beta-barrel proteins, including the association of TOM40 with the receptor TOM22 and small TOM proteins. Can associate with the SAM(core) complex as well as the MDM12-MMM1 complex, both involved in late steps of the major beta-barrel assembly pathway, that is responsible for biogenesis of all outer membrane beta-barrel proteins. May act as a switch that shuttles between both complexes and channels precursor proteins into the TOM40-specific pathway. Plays a role in mitochondrial morphology and in the inheritance of mitochondria. The polypeptide is Mitochondrial distribution and morphology protein 10 (Coccidioides immitis (strain RS) (Valley fever fungus)).